A 1443-amino-acid polypeptide reads, in one-letter code: MYAVYKQAHPPTGLEFSMYCNFFNNSERNLVVAGTSQLYVYRLNRDAEALTKNDRSTEGKAHREKLELAASFSFFGNVMSMASVQLAGAKRDALLLSFKDAKLSVVEYDPGTHDLKTLSLHYFEEPELRDGFVQNVHTPRVRVDPDGRCAAMLVYGTRLVVLPFRRESLAEEHEGLVGEGQRSSFLPSYIIDVRALDEKLLNIIDLQFLHGYYEPTLLILFEPNQTWPGRVAVRQDTCSIVAISLNITQKVHPVIWSLTSLPFDCTQALAVPKPIGGVVVFAVNSLLYLNQSVPPYGVALNSLTTGTTAFPLRTQEGVRITLDCAQATFISYDKMVISLKGGEIYVLTLITDGMRSVRAFHFDKAAASVLTTSMVTMEPGYLFLGSRLGNSLLLKYTEKLQEPPASAVREAADKEEPPSKKKRVDATAGWSAAGKSVPQDEVDEIEVYGSEAQSGTQLATYSFEVCDSILNIGPCANAAVGEPAFLSEEFQNSPEPDLEIVVCSGHGKNGALSVLQKSIRPQVVTTFELPGCYDMWTVIAPVRKEEEDNPKGEGTEQEPSTTPEADDDGRRHGFLILSREDSTMILQTGQEIMELDTSGFATQGPTVFAGNIGDNRYIVQVSPLGIRLLEGVNQLHFIPVDLGAPIVQCAVADPYVVIMSAEGHVTMFLLKSDSYGGRHHRLALHKPPLHHQSKVITLCLYRDLSGMFTTESRLGGARDELGGRSGPEAEGLGSETSPTVDDEEEMLYGDSGSLFSPSKEEARRSSQPPADRDPAPFRAEPTHWCLLVRENGTMEIYQLPDWRLVFLVKNFPVGQRVLVDSSFGQPTTQGEARREEATRQGELPLVKEVLLVALGSRQSRPYLLVHVDQELLIYEAFPHDSQLGQGNLKVRFKKVPHNINFREKKPKPSKKKAEGGGAEEGAGARGRVARFRYFEDIYGYSGVFICGPSPHWLLVTGRGALRLHPMAIDGPVDSFAPFHNVNCPRGFLYFNRQGELRISVLPAYLSYDAPWPVRKIPLRCTAHYVAYHVESKVYAVATSTNTPCARIPRMTGEEKEFETIERDERYIHPQQEAFSIQLISPVSWEAIPNARIELQEWEHVTCMKTVSLRSEETVSGLKGYVAAGTCLMQGEEVTCRGRILIMDVIEVVPEPGQPLTKNKFKVLYEKEQKGPVTALCHCNGHLVSAIGQKIFLWSLRASELTGMAFIDTQLYIHQMISVKNFILAADVMKSISLLRYQEESKTLSLVSRDAKPLEVYSVDFMVDNAQLGFLVSDRDRNLMVYMYLPEAKESFGGMRLLRRADFHVGAHVNTFWRTPCRGATEGLSKKSVVWENKHITWFATLDGGIGLLLPMQEKTYRRLLMLQNALTTMLPHHAGLNPRAFRMLHVDRRTLQNAVRNVLDGELLNRYLYLSTMERSELAKKIGTTPDIILDDLLETDRVTAHF.

Disordered regions lie at residues 404–435 (PASA…AAGK), 546–570 (EEDN…DDGR), 715–777 (GGAR…PAPF), and 901–921 (FREK…AEEG). Basic and acidic residues predominate over residues 410-419 (EAADKEEPPS). Phosphoserine occurs at positions 756 and 766. A compositionally biased stretch (basic and acidic residues) spans 758 to 775 (SKEEARRSSQPPADRDPA). A Nuclear localization signal motif is present at residues 893 to 908 (KKVPHNINFREKKPKP).

It belongs to the CPSF1 family. As to quaternary structure, component of the cleavage and polyadenylation specificity factor (CPSF) complex, composed of CPSF1, CPSF2, CPSF3, CPSF4 and FIP1L1. Found in a complex with CPSF1, FIP1L1 and PAPOLA. Interacts with FIP1L1, TENT2/GLD2 and SRRM1. Interacts with TUT1; the interaction is direct and mediates the recruitment of the CPSF complex on the 3'UTR of selected pre-mRNAs. In terms of processing, the N-terminus is blocked. In terms of tissue distribution, widely expressed, with high expression in the retina.

The protein localises to the nucleus. Its subcellular location is the nucleoplasm. Its function is as follows. Component of the cleavage and polyadenylation specificity factor (CPSF) complex that plays a key role in pre-mRNA 3'-end formation, recognizing the AAUAAA signal sequence and interacting with poly(A) polymerase and other factors to bring about cleavage and poly(A) addition. This subunit is involved in the RNA recognition step of the polyadenylation reaction. May play a role in eye morphogenesis and the development of retinal ganglion cell projections to the midbrain. This Homo sapiens (Human) protein is Cleavage and polyadenylation specificity factor subunit 1 (CPSF1).